The chain runs to 417 residues: Tol-Pal system protein TolB (417 aa).

The N-terminal stretch at 1–16 (MRYLWLFLIHTIGLFA) is a signal peptide.

Belongs to the TolB family. In terms of assembly, the Tol-Pal system is composed of five core proteins: the inner membrane proteins TolA, TolQ and TolR, the periplasmic protein TolB and the outer membrane protein Pal. They form a network linking the inner and outer membranes and the peptidoglycan layer.

It is found in the periplasm. Its function is as follows. Part of the Tol-Pal system, which plays a role in outer membrane invagination during cell division and is important for maintaining outer membrane integrity. This chain is Tol-Pal system protein TolB, found in Helicobacter pylori (strain ATCC 700392 / 26695) (Campylobacter pylori).